A 433-amino-acid chain; its full sequence is Metacaspase-1 (433 aa).

The tract at residues 1–123 is disordered; that stretch reads MYPGRAKPTY…PPSQVQHTGP (123 aa). Positions 9-44 are enriched in low complexity; that stretch reads TYNNQQAQQAQSQVGYQTGYSNAQPQQQYYTAPQQQ. Composition is skewed to polar residues over residues 45–55 and 83–109; these read NVSGSSMSFQH and QQNY…QQPQ. Catalysis depends on residues His-222 and Cys-278.

Belongs to the peptidase C14B family.

In terms of biological role, involved in cell death (apoptosis). The polypeptide is Metacaspase-1 (MCA1) (Kluyveromyces lactis (strain ATCC 8585 / CBS 2359 / DSM 70799 / NBRC 1267 / NRRL Y-1140 / WM37) (Yeast)).